The chain runs to 292 residues: Mycothiol acetyltransferase (292 aa).

N-acetyltransferase domains lie at 13–168 and 159–292; these read ALDR…KWLQ and KSVA…VYEK. Glu40 contacts 1D-myo-inositol 2-(L-cysteinylamino)-2-deoxy-alpha-D-glucopyranoside. 77-79 is a binding site for acetyl-CoA; it reads LAV. Glu179, Lys218, and Glu226 together coordinate 1D-myo-inositol 2-(L-cysteinylamino)-2-deoxy-alpha-D-glucopyranoside. Acetyl-CoA-binding positions include 230 to 232 and 237 to 243; these read VGL and RGRGLGD. Tyr264 contributes to the 1D-myo-inositol 2-(L-cysteinylamino)-2-deoxy-alpha-D-glucopyranoside binding site.

This sequence belongs to the acetyltransferase family. MshD subfamily. In terms of assembly, monomer.

The enzyme catalyses 1D-myo-inositol 2-(L-cysteinylamino)-2-deoxy-alpha-D-glucopyranoside + acetyl-CoA = mycothiol + CoA + H(+). Its function is as follows. Catalyzes the transfer of acetyl from acetyl-CoA to desacetylmycothiol (Cys-GlcN-Ins) to form mycothiol. The sequence is that of Mycothiol acetyltransferase from Corynebacterium glutamicum (strain ATCC 13032 / DSM 20300 / JCM 1318 / BCRC 11384 / CCUG 27702 / LMG 3730 / NBRC 12168 / NCIMB 10025 / NRRL B-2784 / 534).